Here is a 211-residue protein sequence, read N- to C-terminus: Cell division protein SepF (211 aa).

The segment covering 15–26 (DTDEVNEVEEEV) has biased composition (acidic residues). The segment at 15–111 (DTDEVNEVEE…ETYQAQTTVQ (97 aa)) is disordered. Composition is skewed to polar residues over residues 44 to 57 (IPSQQTSRQSQNPA), 64 to 81 (ARSQQTESDSLPTYPNRQ), and 91 to 111 (RESVTASTARRETYQAQTTVQ).

The protein belongs to the SepF family. Homodimer. Interacts with FtsZ.

It localises to the cytoplasm. Functionally, cell division protein that is part of the divisome complex and is recruited early to the Z-ring. Probably stimulates Z-ring formation, perhaps through the cross-linking of FtsZ protofilaments. Its function overlaps with FtsA. This is Cell division protein SepF from Streptococcus uberis (strain ATCC BAA-854 / 0140J).